The chain runs to 325 residues: Eukaryotic translation initiation factor 3 subunit I (325 aa).

WD repeat units lie at residues 8 to 47 (GHER…RLGT), 50 to 89 (GHTG…QLAL), 144 to 183 (CSES…VLKK), 186 to 225 (EHTK…HVKT), and 283 to 324 (GHFG…FELE).

This sequence belongs to the eIF-3 subunit I family. As to quaternary structure, component of the eukaryotic translation initiation factor 3 (eIF-3) complex, which is composed of 13 subunits: eif3a, eif3b, eif3c, eif3d, eif3e, eif3f, eif3g, eif3h, eif3i, eif3j, eif3k, eif3l and eif3m.

The protein localises to the cytoplasm. Functionally, component of the eukaryotic translation initiation factor 3 (eIF-3) complex, which is involved in protein synthesis of a specialized repertoire of mRNAs and, together with other initiation factors, stimulates binding of mRNA and methionyl-tRNAi to the 40S ribosome. The eIF-3 complex specifically targets and initiates translation of a subset of mRNAs involved in cell proliferation. The sequence is that of Eukaryotic translation initiation factor 3 subunit I (eif3i) from Danio rerio (Zebrafish).